Reading from the N-terminus, the 210-residue chain is Na(+)-translocating NADH-quinone reductase subunit D (210 aa).

6 helical membrane-spanning segments follow: residues proline 14–valine 34, leucine 42–isoleucine 62, isoleucine 72–alanine 92, glutamate 96–glycine 116, phenylalanine 131–phenylalanine 151, and asparagine 178–isoleucine 198.

This sequence belongs to the NqrDE/RnfAE family. In terms of assembly, composed of six subunits; NqrA, NqrB, NqrC, NqrD, NqrE and NqrF.

The protein localises to the cell inner membrane. It carries out the reaction a ubiquinone + n Na(+)(in) + NADH + H(+) = a ubiquinol + n Na(+)(out) + NAD(+). Its function is as follows. NQR complex catalyzes the reduction of ubiquinone-1 to ubiquinol by two successive reactions, coupled with the transport of Na(+) ions from the cytoplasm to the periplasm. NqrA to NqrE are probably involved in the second step, the conversion of ubisemiquinone to ubiquinol. This chain is Na(+)-translocating NADH-quinone reductase subunit D, found in Shewanella denitrificans (strain OS217 / ATCC BAA-1090 / DSM 15013).